The following is a 70-amino-acid chain: Small ribosomal subunit protein bS21 (70 aa).

Positions 43 to 70 (TERKRKAAAAVKRQHKRLRSLTLPPKLY) are disordered. The segment covering 45 to 61 (RKRKAAAAVKRQHKRLR) has biased composition (basic residues).

Belongs to the bacterial ribosomal protein bS21 family.

This is Small ribosomal subunit protein bS21 from Dechloromonas aromatica (strain RCB).